We begin with the raw amino-acid sequence, 390 residues long: Putative gustatory receptor 59d (390 aa).

Over 1–38 (MADLLKLCLRIAYAYGRLTGVINFKIDLKTGQALVTRG) the chain is Cytoplasmic. Residues 39–59 (ATLISVSTHLLIFALLLYQTM) form a helical membrane-spanning segment. Topologically, residues 60–75 (RKSVVNVMWKYANSLH) are extracellular. The chain crosses the membrane as a helical span at residues 76–96 (EYVFLVIAGFRVVCVFLELVS). The Cytoplasmic segment spans residues 97–128 (RWSQRRTFVRLFNSFRRLYQRNPDIIQYCRRS). Residues 129 to 149 (IVSKFFCVTMTETLHIIVTLA) form a helical membrane-spanning segment. Over 150–156 (MMRNRLS) the chain is Extracellular. The helical transmembrane segment at 157–177 (IALALRIWAVLSLTAIINVII) threads the bilayer. The Cytoplasmic segment spans residues 178-252 (TQYYVATACV…NLSTAYEGEV (75 aa)). Residues 253–273 (VCLVITYYLNMLGTSYLLFSI) traverse the membrane as a helical segment. The Extracellular portion of the chain corresponds to 274 to 283 (SKYGNFGNNL). A helical membrane pass occupies residues 284 to 304 (LVIITLCGIVYFVFYVVDCWI). Topologically, residues 305-366 (NAFNVFYLLD…MYGLFEFGRG (62 aa)) are cytoplasmic. Residues 367-383 (TSFAVFNSLLTHSLLLI) form a helical membrane-spanning segment. The Extracellular portion of the chain corresponds to 384–390 (QYDVQNF).

Belongs to the insect chemoreceptor superfamily. Gustatory receptor (GR) family. Gr22e subfamily. In terms of tissue distribution, expressed in the adult labellar chemosensory neurons. In larvae, is expressed in neurons of the terminal external chemosensory organ as well as in the dorsal pharyngeal sense organ.

The protein resides in the cell membrane. Functionally, probable gustatory receptor which mediates acceptance or avoidance behavior, depending on its substrates. The polypeptide is Putative gustatory receptor 59d (Gr59d) (Drosophila melanogaster (Fruit fly)).